A 789-amino-acid chain; its full sequence is Fibrinogen alpha chain (789 aa).

Positions 1-19 are cleaved as a signal peptide; that stretch reads MLSLRVTCLILSVASTVWT. S46 carries the phosphoserine modification. Residues 69 to 554 are a coiled coil; the sequence is CRMKGLIDEA…GRARARPTRD (486 aa). 2 stretches are compositionally biased toward basic and acidic residues: residues 263 to 287 and 384 to 396; these read ERPG…RGDF and KGDK…KEKV. Residues 263–420 form a disordered region; sequence ERPGKDGGSR…TITKTVTGPD (158 aa). Residues 397–416 show a composition bias toward polar residues; it reads TSSGTSTTHRSCSKTITKTV. C408 and C438 form a disulfide bridge. Residue S447 is modified to Phosphoserine. P504 is subject to 4-hydroxyproline; by P4HA1. Residues 526–541 are compositionally biased toward basic and acidic residues; that stretch reads ADEAGSEAHREGETRN. The segment at 526–555 is disordered; the sequence is ADEAGSEAHREGETRNTKRGRARARPTRDC. Residues 546 to 787 enclose the Fibrinogen C-terminal domain; the sequence is RARARPTRDC…AVRMKIRPLV (242 aa). Residue N609 is glycosylated (N-linked (GlcNAc...) asparagine). D714, D716, W718, and E720 together coordinate Ca(2+). C722 and C735 form a disulfide bridge.

Heterohexamer; disulfide linked. Contains 2 sets of 3 non-identical chains (alpha, beta and gamma). The 2 heterotrimers are in head to head conformation with the N-termini in a small central domain. Conversion of fibrinogen to fibrin is triggered by thrombin, which cleaves fibrinopeptides A and B from alpha and beta chains, and thus exposes the N-terminal polymerization sites responsible for the formation of the soft clot. The soft clot is converted into the hard clot by factor XIIIA which catalyzes the epsilon-(gamma-glutamyl)lysine cross-linking between gamma chains (stronger) and between alpha chains (weaker) of different monomers. Post-translationally, forms F13A-mediated cross-links between a glutamine and the epsilon-amino group of a lysine residue, forming fibronectin-fibrinogen heteropolymers. In terms of processing, phosphorylated by FAM20C in the extracellular medium. In terms of tissue distribution, expressed in liver.

The protein resides in the secreted. Cleaved by the protease thrombin to yield monomers which, together with fibrinogen beta (FGB) and fibrinogen gamma (FGG), polymerize to form an insoluble fibrin matrix. Fibrin has a major function in hemostasis as one of the primary components of blood clots. In addition, functions during the early stages of wound repair to stabilize the lesion and guide cell migration during re-epithelialization. Was originally thought to be essential for platelet aggregation, based on in vitro studies using anticoagulated blood. However, subsequent studies have shown that it is not absolutely required for thrombus formation in vivo. Enhances expression of SELP in activated platelets via an ITGB3-dependent pathway. Maternal fibrinogen is essential for successful pregnancy. Fibrin deposition is also associated with infection, where it protects against IFNG-mediated hemorrhage. May also facilitate the immune response via both innate and T-cell mediated pathways. This is Fibrinogen alpha chain from Mus musculus (Mouse).